The primary structure comprises 333 residues: MELIVKEESKTDYNYGSDPYNRDIKTLLNTGLVVIDKPSGPTSHEVAAWVRNMLNLVKAGHGGTLDPKVTGALPVALGNTTKCVPIWHIPPKEYVCLMHLHDDAELVDIENIFKEFTGRIHQRPPLKAAVKRSLRIRKIYEIEILEIDGRDILFRTKCQSGTYLRKLVDDMGEALGTSAHMQELRRTISGPFYENEAVYLQDLLDAYIFWKEDGNEEELRKIVKPLEYGLQHLKKIIIKDSAVDAVCHGATLYSSGISKIEKGLGTDEVVLIETLKGEAVAVGKPLMNTKDMLKTEEGEVVEITRVIMEPGIYPRIWKKRNKNDKSKPELKKK.

The active-site Nucleophile is aspartate 66. One can recognise a PUA domain in the interval leucine 233–methionine 308.

Belongs to the pseudouridine synthase TruB family. Type 2 subfamily.

It carries out the reaction uridine(55) in tRNA = pseudouridine(55) in tRNA. Its function is as follows. Could be responsible for synthesis of pseudouridine from uracil-55 in the psi GC loop of transfer RNAs. The chain is Probable tRNA pseudouridine synthase B from Methanococcus maripaludis (strain DSM 14266 / JCM 13030 / NBRC 101832 / S2 / LL).